The chain runs to 112 residues: T cell receptor alpha variable 7 (112 aa).

An N-terminal signal peptide occupies residues M1 to G21. The region spanning E22–D112 is the Ig-like domain. C44 and C109 are joined by a disulfide. N-linked (GlcNAc...) asparagine glycans are attached at residues N84 and N90.

In terms of assembly, alpha-beta TR is a heterodimer composed of an alpha and beta chain; disulfide-linked. The alpha-beta TR is associated with the transmembrane signaling CD3 coreceptor proteins to form the TR-CD3 (TcR or TCR). The assembly of alpha-beta TR heterodimers with CD3 occurs in the endoplasmic reticulum where a single alpha-beta TR heterodimer associates with one CD3D-CD3E heterodimer, one CD3G-CD3E heterodimer and one CD247 homodimer forming a stable octameric structure. CD3D-CD3E and CD3G-CD3E heterodimers preferentially associate with TR alpha and TR beta chains, respectively. The association of the CD247 homodimer is the last step of TcR assembly in the endoplasmic reticulum and is required for transport to the cell surface.

The protein localises to the cell membrane. V region of the variable domain of T cell receptor (TR) alpha chain that participates in the antigen recognition. Alpha-beta T cell receptors are antigen specific receptors which are essential to the immune response and are present on the cell surface of T lymphocytes. Recognize peptide-major histocompatibility (MH) (pMH) complexes that are displayed by antigen presenting cells (APC), a prerequisite for efficient T cell adaptive immunity against pathogens. Binding of alpha-beta TR to pMH complex initiates TR-CD3 clustering on the cell surface and intracellular activation of LCK that phosphorylates the ITAM motifs of CD3G, CD3D, CD3E and CD247 enabling the recruitment of ZAP70. In turn ZAP70 phosphorylates LAT, which recruits numerous signaling molecules to form the LAT signalosome. The LAT signalosome propagates signal branching to three major signaling pathways, the calcium, the mitogen-activated protein kinase (MAPK) kinase and the nuclear factor NF-kappa-B (NF-kB) pathways, leading to the mobilization of transcription factors that are critical for gene expression and essential for T cell growth and differentiation. The T cell repertoire is generated in the thymus, by V-(D)-J rearrangement. This repertoire is then shaped by intrathymic selection events to generate a peripheral T cell pool of self-MH restricted, non-autoaggressive T cells. Post-thymic interaction of alpha-beta TR with the pMH complexes shapes TR structural and functional avidity. This is T cell receptor alpha variable 7 from Homo sapiens (Human).